Consider the following 267-residue polypeptide: Methyl-coenzyme M reductase II subunit gamma (267 aa).

R123 lines the coenzyme M pocket.

It belongs to the methyl-coenzyme M reductase gamma subunit family. As to quaternary structure, MCR is a hexamer of two alpha, two beta, and two gamma chains, forming a dimer of heterotrimers. The cofactor is coenzyme F430.

The enzyme catalyses coenzyme B + methyl-coenzyme M = methane + coenzyme M-coenzyme B heterodisulfide. The protein operates within one-carbon metabolism; methyl-coenzyme M reduction; methane from methyl-coenzyme M: step 1/1. Its function is as follows. Component of the methyl-coenzyme M reductase (MCR) I that catalyzes the reductive cleavage of methyl-coenzyme M (CoM-S-CH3 or 2-(methylthio)ethanesulfonate) using coenzyme B (CoB or 7-mercaptoheptanoylthreonine phosphate) as reductant which results in the production of methane and the mixed heterodisulfide of CoB and CoM (CoM-S-S-CoB). This is the final step in methanogenesis. This is Methyl-coenzyme M reductase II subunit gamma (mrtG) from Methanothermus fervidus (strain ATCC 43054 / DSM 2088 / JCM 10308 / V24 S).